Reading from the N-terminus, the 129-residue chain is Large ribosomal subunit protein bL12c (129 aa).

This sequence belongs to the bacterial ribosomal protein bL12 family. In terms of assembly, homodimer. Part of the ribosomal stalk of the 50S ribosomal subunit. Forms a multimeric L10(L12)X complex, where L10 forms an elongated spine to which 2 to 4 L12 dimers bind in a sequential fashion. Binds GTP-bound translation factors.

It localises to the plastid. The protein localises to the chloroplast. Its function is as follows. Forms part of the ribosomal stalk which helps the ribosome interact with GTP-bound translation factors. Is thus essential for accurate translation. The protein is Large ribosomal subunit protein bL12c of Tupiella akineta (Green alga).